The chain runs to 621 residues: 2-hydroxyacyl-CoA lyase 2 (621 aa).

A helical membrane pass occupies residues leucine 7 to tyrosine 29. Glutamate 87 lines the thiamine diphosphate pocket. The segment at aspartate 459–cysteine 539 is thiamine pyrophosphate binding. Mg(2+) is bound by residues aspartate 510 and asparagine 536.

The protein belongs to the TPP enzyme family. It depends on Mg(2+) as a cofactor. The cofactor is thiamine diphosphate.

The protein localises to the endoplasmic reticulum membrane. It carries out the reaction 2-hydroxyoctadecanoyl-CoA = heptadecanal + formyl-CoA. It catalyses the reaction (2R)-hydroxyhexadecanoyl-CoA = pentadecanal + formyl-CoA. Endoplasmic reticulum 2-OH acyl-CoA lyase involved in the cleavage (C1 removal) reaction in the fatty acid alpha-oxydation in a thiamine pyrophosphate (TPP)-dependent manner. The polypeptide is 2-hydroxyacyl-CoA lyase 2 (ilvbl) (Danio rerio (Zebrafish)).